Here is a 277-residue protein sequence, read N- to C-terminus: NH(3)-dependent NAD(+) synthetase (277 aa).

An ATP-binding site is contributed by 36–43; sequence GLSGGIDS. Residue Asp42 participates in Mg(2+) binding. Arg118 is a deamido-NAD(+) binding site. Thr138 contributes to the ATP binding site. A Mg(2+)-binding site is contributed by Glu143. Positions 167 and 189 each coordinate ATP.

The protein belongs to the NAD synthetase family. Homodimer.

It catalyses the reaction deamido-NAD(+) + NH4(+) + ATP = AMP + diphosphate + NAD(+) + H(+). Its pathway is cofactor biosynthesis; NAD(+) biosynthesis; NAD(+) from deamido-NAD(+) (ammonia route): step 1/1. Catalyzes the ATP-dependent amidation of deamido-NAD to form NAD. Uses ammonia as a nitrogen source. In Pelodictyon phaeoclathratiforme (strain DSM 5477 / BU-1), this protein is NH(3)-dependent NAD(+) synthetase.